A 160-amino-acid polypeptide reads, in one-letter code: Cytochrome b6-f complex subunit 4 (160 aa).

3 helical membrane passes run 36–56, 95–115, and 131–151; these read LLYIFPVVILGTIACNVGLAV, LLGVLLMVSVPTGLLTVPFLE, and TVFLIGTVVALWLGIGATLPI.

Belongs to the cytochrome b family. PetD subfamily. The 4 large subunits of the cytochrome b6-f complex are cytochrome b6, subunit IV (17 kDa polypeptide, petD), cytochrome f and the Rieske protein, while the 4 small subunits are petG, petL, petM and petN. The complex functions as a dimer.

Its subcellular location is the plastid. The protein resides in the chloroplast thylakoid membrane. In terms of biological role, component of the cytochrome b6-f complex, which mediates electron transfer between photosystem II (PSII) and photosystem I (PSI), cyclic electron flow around PSI, and state transitions. This is Cytochrome b6-f complex subunit 4 from Sorghum bicolor (Sorghum).